The chain runs to 685 residues: DNA ligase (685 aa).

Residues 39–43 (DGEYD), 88–89 (SL), and Glu-119 each bind NAD(+). Lys-121 functions as the N6-AMP-lysine intermediate in the catalytic mechanism. NAD(+) contacts are provided by Arg-142, Glu-182, Lys-302, and Lys-326. Zn(2+) is bound by residues Cys-420, Cys-423, Cys-438, and Cys-443. The BRCT domain occupies 606–685 (DNATFFSEKR…QTFLEHLDRG (80 aa)).

The protein belongs to the NAD-dependent DNA ligase family. LigA subfamily. It depends on Mg(2+) as a cofactor. The cofactor is Mn(2+).

It carries out the reaction NAD(+) + (deoxyribonucleotide)n-3'-hydroxyl + 5'-phospho-(deoxyribonucleotide)m = (deoxyribonucleotide)n+m + AMP + beta-nicotinamide D-nucleotide.. Functionally, DNA ligase that catalyzes the formation of phosphodiester linkages between 5'-phosphoryl and 3'-hydroxyl groups in double-stranded DNA using NAD as a coenzyme and as the energy source for the reaction. It is essential for DNA replication and repair of damaged DNA. The chain is DNA ligase from Desulforapulum autotrophicum (strain ATCC 43914 / DSM 3382 / VKM B-1955 / HRM2) (Desulfobacterium autotrophicum).